Here is a 473-residue protein sequence, read N- to C-terminus: Mitochondrial distribution and morphology protein 10 (473 aa).

Belongs to the MDM10 family. Component of the ER-mitochondria encounter structure (ERMES) or MDM complex, composed of MMM1, MDM10, MDM12 and MDM34. Associates with the mitochondrial outer membrane sorting assembly machinery SAM(core) complex.

The protein resides in the mitochondrion outer membrane. Functionally, component of the ERMES/MDM complex, which serves as a molecular tether to connect the endoplasmic reticulum and mitochondria. Components of this complex are involved in the control of mitochondrial shape and protein biogenesis and may function in phospholipid exchange. MDM10 is involved in the late assembly steps of the general translocase of the mitochondrial outer membrane (TOM complex). Functions in the TOM40-specific route of the assembly of outer membrane beta-barrel proteins, including the association of TOM40 with the receptor TOM22 and small TOM proteins. Can associate with the SAM(core) complex as well as the MDM12-MMM1 complex, both involved in late steps of the major beta-barrel assembly pathway, that is responsible for biogenesis of all outer membrane beta-barrel proteins. May act as a switch that shuttles between both complexes and channels precursor proteins into the TOM40-specific pathway. Plays a role in mitochondrial morphology and in the inheritance of mitochondria. In Candida albicans (strain SC5314 / ATCC MYA-2876) (Yeast), this protein is Mitochondrial distribution and morphology protein 10.